A 206-amino-acid polypeptide reads, in one-letter code: Pyridoxine/pyridoxamine 5'-phosphate oxidase (206 aa).

FMN contacts are provided by residues 53–58 (RMVLLK), 68–69 (YT), Lys-75, and Gln-97. Lys-58 serves as a coordination point for substrate. Positions 115, 119, and 123 each coordinate substrate. Residues 132–133 (QS) and Trp-177 contribute to the FMN site. 183–185 (RLH) provides a ligand contact to substrate. An FMN-binding site is contributed by Arg-187.

The protein belongs to the pyridoxamine 5'-phosphate oxidase family. As to quaternary structure, homodimer. FMN is required as a cofactor.

It carries out the reaction pyridoxamine 5'-phosphate + O2 + H2O = pyridoxal 5'-phosphate + H2O2 + NH4(+). The enzyme catalyses pyridoxine 5'-phosphate + O2 = pyridoxal 5'-phosphate + H2O2. Its pathway is cofactor metabolism; pyridoxal 5'-phosphate salvage; pyridoxal 5'-phosphate from pyridoxamine 5'-phosphate: step 1/1. The protein operates within cofactor metabolism; pyridoxal 5'-phosphate salvage; pyridoxal 5'-phosphate from pyridoxine 5'-phosphate: step 1/1. Functionally, catalyzes the oxidation of either pyridoxine 5'-phosphate (PNP) or pyridoxamine 5'-phosphate (PMP) into pyridoxal 5'-phosphate (PLP). The polypeptide is Pyridoxine/pyridoxamine 5'-phosphate oxidase (Rhizobium meliloti (strain 1021) (Ensifer meliloti)).